The following is an 831-amino-acid chain: Replication restart protein PriA (831 aa).

The Helicase ATP-binding domain occupies 304–471; it reads VLPLQGYHQV…HRHQNDPQRH (168 aa). Residue 317-324 participates in ATP binding; that stretch reads GVTGSGKT. The DEAH box signature appears at 413 to 416; it reads DEEH. C537, C540, C546, C549, C568, C571, C581, and C584 together coordinate Zn(2+). A Helicase C-terminal domain is found at 575–735; that stretch reads EIQPKVCPEC…ELPQREMLNY (161 aa).

This sequence belongs to the helicase family. PriA subfamily. Component of the replication restart primosome. Zn(2+) is required as a cofactor.

The catalysed reaction is Couples ATP hydrolysis with the unwinding of duplex DNA by translocating in the 3'-5' direction.. The enzyme catalyses ATP + H2O = ADP + phosphate + H(+). Its function is as follows. Initiates the restart of stalled replication forks, which reloads the replicative helicase on sites other than the origin of replication. Recognizes and binds to abandoned replication forks and remodels them to uncover a helicase loading site. Promotes assembly of the primosome at these replication forks. The chain is Replication restart protein PriA from Synechocystis sp. (strain ATCC 27184 / PCC 6803 / Kazusa).